The following is a 74-amino-acid chain: DNA-directed RNA polymerase subunit omega (74 aa).

The protein belongs to the RNA polymerase subunit omega family. In terms of assembly, the RNAP catalytic core consists of 2 alpha, 1 beta, 1 beta' and 1 omega subunit. When a sigma factor is associated with the core the holoenzyme is formed, which can initiate transcription.

It carries out the reaction RNA(n) + a ribonucleoside 5'-triphosphate = RNA(n+1) + diphosphate. Its function is as follows. Promotes RNA polymerase assembly. Latches the N- and C-terminal regions of the beta' subunit thereby facilitating its interaction with the beta and alpha subunits. In Helicobacter pylori (strain Shi470), this protein is DNA-directed RNA polymerase subunit omega.